A 364-amino-acid chain; its full sequence is Anionic peroxidase (364 aa).

An N-terminal signal peptide occupies residues 1-20 (MASFMKQLSLVLSFIALALA). Residues 21–66 (GCAVYQNTQTAMKDQLKVTPTWLDNTLKSTNLLSLGLGKPSGGKLG) constitute a propeptide that is removed on maturation. His-99 (proton acceptor) is an active-site residue. Ca(2+) contacts are provided by Asp-100, Val-103, Gly-105, and Asp-107. A disulfide bridge connects residues Cys-101 and Cys-106. Asn-113, Asn-188, Asn-202, and Asn-216 each carry an N-linked (GlcNAc...) asparagine glycan. Disulfide bonds link Cys-155–Cys-343 and Cys-234–Cys-255. His-227 contacts heme b. Position 228 (Thr-228) interacts with Ca(2+). Asn-254 and Asn-260 each carry an N-linked (GlcNAc...) asparagine glycan. Positions 268, 270, and 275 each coordinate Ca(2+). A glycan (N-linked (GlcNAc...) asparagine) is linked at Asn-299.

This sequence belongs to the peroxidase family. Classical plant (class III) peroxidase subfamily. It depends on Ca(2+) as a cofactor. Heme b serves as cofactor. Highly expressed in suspension cultured cells and calli. Weak expression also found in the stems of intact plants. No expression in leaf, tuberous root and non-tuberous root.

It localises to the secreted. It carries out the reaction 2 a phenolic donor + H2O2 = 2 a phenolic radical donor + 2 H2O. Removal of H(2)O(2), oxidation of toxic reductants, biosynthesis and degradation of lignin, suberization, auxin catabolism, response to environmental stresses such as wounding, pathogen attack and oxidative stress. These functions might be dependent on each isozyme/isoform in each plant tissue. Functionally, may contribute to protection against cold-induced oxidative stress. This chain is Anionic peroxidase, found in Ipomoea batatas (Sweet potato).